The primary structure comprises 347 residues: Uroporphyrinogen decarboxylase (347 aa).

Substrate-binding positions include 36–40 (RQAGR), Asp86, Tyr160, Ser212, and His326.

The protein belongs to the uroporphyrinogen decarboxylase family. As to quaternary structure, homodimer.

It localises to the cytoplasm. It carries out the reaction uroporphyrinogen III + 4 H(+) = coproporphyrinogen III + 4 CO2. It participates in porphyrin-containing compound metabolism; protoporphyrin-IX biosynthesis; coproporphyrinogen-III from 5-aminolevulinate: step 4/4. Catalyzes the decarboxylation of four acetate groups of uroporphyrinogen-III to yield coproporphyrinogen-III. This chain is Uroporphyrinogen decarboxylase, found in Wolbachia sp. subsp. Brugia malayi (strain TRS).